The chain runs to 432 residues: D-amino acid dehydrogenase (432 aa).

3–17 (VVILGSGVVGVASAW) is an FAD binding site.

This sequence belongs to the DadA oxidoreductase family. Requires FAD as cofactor.

It carries out the reaction a D-alpha-amino acid + A + H2O = a 2-oxocarboxylate + AH2 + NH4(+). Its pathway is amino-acid degradation; D-alanine degradation; NH(3) and pyruvate from D-alanine: step 1/1. Functionally, oxidative deamination of D-amino acids. The protein is D-amino acid dehydrogenase of Shigella sonnei (strain Ss046).